The following is a 295-amino-acid chain: Probable alpha-L-glutamate ligase (295 aa).

An ATP-grasp domain is found at 104–287 (HQLLAAQGID…VAAAIVQHLE (184 aa)). ATP-binding positions include Lys141, 178-179 (EF), Asp187, and 211-213 (RSN). Mg(2+) is bound by residues Asp248, Glu260, and Asn262. Positions 248, 260, and 262 each coordinate Mn(2+).

This sequence belongs to the RimK family. Mg(2+) serves as cofactor. The cofactor is Mn(2+).

The polypeptide is Probable alpha-L-glutamate ligase (Xanthomonas euvesicatoria pv. vesicatoria (strain 85-10) (Xanthomonas campestris pv. vesicatoria)).